An 85-amino-acid chain; its full sequence is Protein Vpu (85 aa).

At 1 to 7 the chain is on the extracellular side; the sequence is MHQENLL. Residues 8-28 form a helical membrane-spanning segment; the sequence is ALIALSALCLINVLIWLFNLR. Over 29–85 the chain is Cytoplasmic; it reads IYLVQRKQDRREQEILERLRRIKEIRDDSDYESNEEEQQEVMELIHSHGFANPMFEL.

The protein belongs to the HIV-1 VPU protein family. In terms of assembly, homopentamer. Interacts with host CD4 and BRTC; these interactions induce proteasomal degradation of CD4. Interacts with host BST2; this interaction leads to the degradation of host BST2. Interacts with host FBXW11. Interacts with host AP1M1; this interaction plays a role in the mistrafficking and subsequent degradation of host BST2. Interacts with host RANBP2; this interaction allows Vpu to down-regulate host BLM sumoylation. Post-translationally, phosphorylated by host CK2. This phosphorylation is necessary for interaction with human BTRC and degradation of CD4.

Its subcellular location is the host membrane. With respect to regulation, ion channel activity is inhibited by hexamethylene amiloride in vitro. In terms of biological role, enhances virion budding by targeting host CD4 and Tetherin/BST2 to proteasome degradation. Degradation of CD4 prevents any unwanted premature interactions between viral Env and its host receptor CD4 in the endoplasmic reticulum. Degradation of antiretroviral protein Tetherin/BST2 is important for virion budding, as BST2 tethers new viral particles to the host cell membrane. Mechanistically, Vpu bridges either CD4 or BST2 to BTRC, a substrate recognition subunit of the Skp1/Cullin/F-box protein E3 ubiquitin ligase, induces their ubiquitination and subsequent proteasomal degradation. The alteration of the E3 ligase specificity by Vpu seems to promote the degradation of host IKBKB, leading to NF-kappa-B down-regulation and subsequent apoptosis. Acts as a viroporin that forms an oligomeric ion channel in membranes. Modulates the host DNA repair mechanisms to promote degradation of nuclear viral cDNA in cells that are already productively infected in order to suppress immune sensing and proviral hyper-integration (superinfection). Manipulates PML-NBs and modulates SUMOylation of host BLM protein thereby enhancing its DNA-end processing activity toward viral unintegrated linear DNA. Also inhibits RAD52-mediated homologous repair of viral cDNA, preventing the generation of dead-end circular forms of single copies of the long terminal repeat and permitting sustained nucleolytic attack. The sequence is that of Protein Vpu from Human immunodeficiency virus type 1 group O (isolate MVP5180) (HIV-1).